We begin with the raw amino-acid sequence, 332 residues long: Fructose-1,6-bisphosphatase class 1 (332 aa).

Residues E89, D110, L112, and D113 each contribute to the Mg(2+) site. Residues 113-116 (DGSS), N206, Y239, 257-259 (YLY), and K269 contribute to the substrate site. E275 is a binding site for Mg(2+).

Belongs to the FBPase class 1 family. Homotetramer. Mg(2+) is required as a cofactor.

The protein localises to the cytoplasm. It catalyses the reaction beta-D-fructose 1,6-bisphosphate + H2O = beta-D-fructose 6-phosphate + phosphate. It participates in carbohydrate biosynthesis; gluconeogenesis. The chain is Fructose-1,6-bisphosphatase class 1 from Cronobacter sakazakii (strain ATCC BAA-894) (Enterobacter sakazakii).